The chain runs to 400 residues: Large envelope protein (400 aa).

Residue M1 is modified to N-acetylmethionine. 2 disordered regions span residues 1 to 20 (MGGW…SVPN) and 88 to 115 (VSTI…LRDS). A lipid anchor (N-myristoyl glycine; by host) is attached at G2. Residues 2-119 (GGWSSKPRKG…PPLRDSHPQA (118 aa)) are pre-S1. Residues 2–174 (GGWSSKPRKG…SARTGDPVTN (173 aa)) form a pre-S region. The Virion surface; in external conformation segment spans residues 2 to 181 (GGWSSKPRKG…VTNMENITSG (180 aa)). Over 2–253 (GGWSSKPRKG…PGYRWMCLRR (252 aa)) the chain is Intravirion; in internal conformation. W4 carries N-linked (GlcNAc...) asparagine glycosylation. Residues 88–106 (VSTIPPPASTNRQSGRQPT) are compositionally biased toward polar residues. The segment at 120-174 (MQWNSTAFHQTLQDPRVRGLYLPAGGSSSGTVNPAPNIASHISSISARTGDPVTN) is pre-S2. The helical transmembrane segment at 182 to 202 (FLGPLLVLQAGFFLLTRILTI) threads the bilayer. The Intravirion; in external conformation segment spans residues 203–253 (PQSLDSWWTSLNFLGGSPVCLGQNSQSPTSNHSPTSCPPICPGYRWMCLRR). Residues 254 to 274 (FIIFLFILLLCLIFLLVLLDY) traverse the membrane as a helical segment. Residues 275-348 (QGMLPVCPLI…WASVRFSWLS (74 aa)) are Virion surface-facing. Residue N320 is glycosylated (N-linked (GlcNAc...) asparagine; by host). The helical transmembrane segment at 349 to 369 (LLVPFVQWFVGLSPTVWLSAI) threads the bilayer. Topologically, residues 370-375 (WMMWYW) are intravirion. A helical membrane pass occupies residues 376-398 (GPSLYSIVRPFIPLLPIFFCLWV). Topologically, residues 399-400 (YI) are virion surface.

It belongs to the orthohepadnavirus major surface antigen family. In terms of assembly, in its internal form (Li-HBsAg), interacts with the capsid protein and with the isoform S. Interacts with host chaperone CANX. Associates with host chaperone CANX through its pre-S2 N glycan; this association may be essential for isoform M proper secretion. As to quaternary structure, interacts with isoform L. Interacts with the antigens of satellite virus HDV (HDVAgs); this interaction is required for encapsidation of HDV genomic RNA. Isoform M is N-terminally acetylated by host at a ratio of 90%, and N-glycosylated by host at the pre-S2 region. Post-translationally, myristoylated.

The protein localises to the virion membrane. Its function is as follows. The large envelope protein exists in two topological conformations, one which is termed 'external' or Le-HBsAg and the other 'internal' or Li-HBsAg. In its external conformation the protein attaches the virus to cell receptors and thereby initiating infection. This interaction determines the species specificity and liver tropism. This attachment induces virion internalization predominantly through caveolin-mediated endocytosis. The large envelope protein also assures fusion between virion membrane and endosomal membrane. In its internal conformation the protein plays a role in virion morphogenesis and mediates the contact with the nucleocapsid like a matrix protein. The middle envelope protein plays an important role in the budding of the virion. It is involved in the induction of budding in a nucleocapsid independent way. In this process the majority of envelope proteins bud to form subviral lipoprotein particles of 22 nm of diameter that do not contain a nucleocapsid. In Homo sapiens (Human), this protein is Large envelope protein.